The following is a 147-amino-acid chain: Large ribosomal subunit protein uL13 (147 aa).

Belongs to the universal ribosomal protein uL13 family. Part of the 50S ribosomal subunit.

Its function is as follows. This protein is one of the early assembly proteins of the 50S ribosomal subunit, although it is not seen to bind rRNA by itself. It is important during the early stages of 50S assembly. This Nocardia farcinica (strain IFM 10152) protein is Large ribosomal subunit protein uL13.